We begin with the raw amino-acid sequence, 233 residues long: MRFPTPLIPATLVRRYKRFLADVLLPDGTAATAHVANSGTMLGIDAPGSPVWLSRSPNPARKLPYTLELVEADGTLVGCNTAHPNRIVAEAVAAGEIPALAGYATLRREVKYGRNSRIDLLLEDPVRGSAYVEVKNVHLRRQGRLAEFPDCVTSRGAKHLEELAAMVAAGHRAVMVYLVQRADCDTFRIAADIDPAYAAGLRVALDHGVEALVLGCALTPDGIGIDRTLRLSA.

This sequence belongs to the SfsA family.

The chain is Sugar fermentation stimulation protein homolog from Rhodospirillum centenum (strain ATCC 51521 / SW).